The following is a 541-amino-acid chain: Glucose-6-phosphate isomerase (541 aa).

Catalysis depends on E346, which acts as the Proton donor. Active-site residues include H377 and K506.

Belongs to the GPI family.

The protein localises to the cytoplasm. The catalysed reaction is alpha-D-glucose 6-phosphate = beta-D-fructose 6-phosphate. Its pathway is carbohydrate biosynthesis; gluconeogenesis. It functions in the pathway carbohydrate degradation; glycolysis; D-glyceraldehyde 3-phosphate and glycerone phosphate from D-glucose: step 2/4. In terms of biological role, catalyzes the reversible isomerization of glucose-6-phosphate to fructose-6-phosphate. The sequence is that of Glucose-6-phosphate isomerase from Rhizobium johnstonii (strain DSM 114642 / LMG 32736 / 3841) (Rhizobium leguminosarum bv. viciae).